Consider the following 291-residue polypeptide: Phosphate import ATP-binding protein PstB (291 aa).

The span at 1-17 (MANTNVKEKELAKHTDQ) shows a compositional bias: basic and acidic residues. The disordered stretch occupies residues 1–40 (MANTNVKEKELAKHTDQSQESISTVVSSNEVKHNKESDSN). Over residues 18 to 29 (SQESISTVVSSN) the composition is skewed to polar residues. Residues 30–40 (EVKHNKESDSN) are compositionally biased toward basic and acidic residues. The 242-residue stretch at 45–286 (YSTQNLDLWY…PSDKQTEDYI (242 aa)) folds into the ABC transporter domain. 77–84 (GPSGCGKS) is a binding site for ATP.

Belongs to the ABC transporter superfamily. Phosphate importer (TC 3.A.1.7) family. In terms of assembly, the complex is composed of two ATP-binding proteins (PstB), two transmembrane proteins (PstC and PstA) and a solute-binding protein (PstS).

It localises to the cell membrane. The enzyme catalyses phosphate(out) + ATP + H2O = ADP + 2 phosphate(in) + H(+). In terms of biological role, part of the ABC transporter complex PstSACB involved in phosphate import. Responsible for energy coupling to the transport system. The polypeptide is Phosphate import ATP-binding protein PstB (Staphylococcus haemolyticus (strain JCSC1435)).